The primary structure comprises 308 residues: Phosphate transport system permease protein PstA 1 (308 aa).

6 helical membrane passes run 36 to 56, 96 to 116, 132 to 152, 155 to 175, 204 to 224, and 276 to 296; these read FFFT…WVVI, AGVA…YLVE, VLAG…WIAT, FQQS…PVVV, IVRI…LLSI, and WGAA…AAMI. The region spanning 89-297 is the ABC transmembrane type-1 domain; that stretch reads LYGTLVQAGV…TINLAAAMIR (209 aa).

It belongs to the binding-protein-dependent transport system permease family. CysTW subfamily. As to quaternary structure, the complex is composed of two ATP-binding proteins (PstB), two transmembrane proteins (PstC and PstA) and a solute-binding protein (PstS).

The protein localises to the cell membrane. In terms of biological role, part of the binding-protein-dependent transport system for phosphate; probably responsible for the translocation of the substrate across the membrane. In Mycobacterium tuberculosis (strain ATCC 25618 / H37Rv), this protein is Phosphate transport system permease protein PstA 1 (pstA1).